A 145-amino-acid chain; its full sequence is MKFFCKLESGSSLPEYATSGASGADVRANISEPIAILPGQRALIPTGISVDIPHGYEIQVRSRSGLAVKYGVIVLQSPGTVDADYRGEIRVILANLGESTFIVEPGMRIAQLVVAKVEQVSFVETQEELTATARGTGGFGHTGEC.

Substrate is bound by residues 63 to 65 (RSG), Gln-76, and 80 to 82 (TVD).

Belongs to the dUTPase family. Requires Mg(2+) as cofactor.

The enzyme catalyses dUTP + H2O = dUMP + diphosphate + H(+). It functions in the pathway pyrimidine metabolism; dUMP biosynthesis; dUMP from dCTP (dUTP route): step 2/2. In terms of biological role, this enzyme is involved in nucleotide metabolism: it produces dUMP, the immediate precursor of thymidine nucleotides and it decreases the intracellular concentration of dUTP so that uracil cannot be incorporated into DNA. The polypeptide is Deoxyuridine 5'-triphosphate nucleotidohydrolase (Chlamydia muridarum (strain MoPn / Nigg)).